Consider the following 470-residue polypeptide: Neuraminidase (470 aa).

Residues 1–6 (MNPNQK) are Intravirion-facing. The chain crosses the membrane as a helical span at residues 7–27 (IITIGSASIVLTTIGLLLQIT). The segment at 11-33 (GSASIVLTTIGLLLQITSLCSIW) is involved in apical transport and lipid raft association. At 28–470 (SLCSIWFSHY…GALLPFDIDK (443 aa)) the chain is on the virion surface side. Residues 36 to 88 (HYNQVTQPHEQACSNNTTNYYNETFVNVTNVQNNYTTIIEPSAPNVVHYSSGR) form a hypervariable stalk region region. N-linked (GlcNAc...) asparagine; by host glycans are attached at residues Asn50, Asn51, Asn57, Asn62, and Asn69. The tract at residues 90–470 (LCPVKGWAPL…GALLPFDIDK (381 aa)) is head of neuraminidase. Intrachain disulfides connect Cys91/Cys418, Cys123/Cys128, Cys183/Cys230, Cys232/Cys237, Cys278/Cys291, Cys280/Cys289, Cys317/Cys334, and Cys422/Cys447. Residue Arg117 coordinates substrate. An N-linked (GlcNAc...) asparagine; by host glycan is attached at Asn145. Catalysis depends on Asp150, which acts as the Proton donor/acceptor. Arg151 provides a ligand contact to substrate. Asn269 carries an N-linked (GlcNAc...) asparagine; by host glycan. 276–277 (EE) lines the substrate pocket. Arg292 contacts substrate. Ca(2+) contacts are provided by Asp293, Gly297, and Asp323. Position 369 (Arg369) interacts with substrate. The N-linked (GlcNAc...) asparagine; by host glycan is linked to Asn399. The active-site Nucleophile is the Tyr403. A glycan (N-linked (GlcNAc...) asparagine; by host) is linked at Asn417.

This sequence belongs to the glycosyl hydrolase 34 family. As to quaternary structure, homotetramer. The cofactor is Ca(2+). N-glycosylated.

Its subcellular location is the virion membrane. The protein localises to the host apical cell membrane. The enzyme catalyses Hydrolysis of alpha-(2-&gt;3)-, alpha-(2-&gt;6)-, alpha-(2-&gt;8)- glycosidic linkages of terminal sialic acid residues in oligosaccharides, glycoproteins, glycolipids, colominic acid and synthetic substrates.. Its activity is regulated as follows. Inhibited by the neuraminidase inhibitors zanamivir (Relenza) and oseltamivir (Tamiflu). These drugs interfere with the release of progeny virus from infected cells and are effective against all influenza strains. Resistance to neuraminidase inhibitors is quite rare. Functionally, catalyzes the removal of terminal sialic acid residues from viral and cellular glycoconjugates. Cleaves off the terminal sialic acids on the glycosylated HA during virus budding to facilitate virus release. Additionally helps virus spread through the circulation by further removing sialic acids from the cell surface. These cleavages prevent self-aggregation and ensure the efficient spread of the progeny virus from cell to cell. Otherwise, infection would be limited to one round of replication. Described as a receptor-destroying enzyme because it cleaves a terminal sialic acid from the cellular receptors. May facilitate viral invasion of the upper airways by cleaving the sialic acid moieties on the mucin of the airway epithelial cells. Likely to plays a role in the budding process through its association with lipid rafts during intracellular transport. May additionally display a raft-association independent effect on budding. Plays a role in the determination of host range restriction on replication and virulence. Sialidase activity in late endosome/lysosome traffic seems to enhance virus replication. The chain is Neuraminidase from Influenza A virus (strain A/Turkey/Ontario/6118/1968 H8N4).